A 351-amino-acid polypeptide reads, in one-letter code: MIENLVREEIKGFKNYEVHSIPYRYKMDANETPFELPEEVIKNIQEIVKSSQVNVYPDPTAEKLKEELARYCGVVPTNIFVGNGSDEIIHLIMLAFINKGDVVAYPHPSFAMYSVYSKIAGAVEIPVRLREDYNYDVDSFIKVIEKYQPKLVFLCNPNNPTGSVIEREDIIKIIQKSNGIVVVDEAYFEFYGNTIVDVINEFENLIVLRTLSKAFGLAGLRVGYAVANENILKYLNLVKSPYNINSLSQVIALKVLRTGVLKERVNFILKERERLIKELSKIPGIKVYPSKTNFILVKFKDADYVYQGLLERGILVRDFSKVEGLEGALRITVSSCEANDYLINGLKELLL.

K213 carries the N6-(pyridoxal phosphate)lysine modification.

The protein belongs to the class-II pyridoxal-phosphate-dependent aminotransferase family. Histidinol-phosphate aminotransferase subfamily. In terms of assembly, homodimer. Pyridoxal 5'-phosphate serves as cofactor.

The catalysed reaction is L-histidinol phosphate + 2-oxoglutarate = 3-(imidazol-4-yl)-2-oxopropyl phosphate + L-glutamate. The protein operates within amino-acid biosynthesis; L-histidine biosynthesis; L-histidine from 5-phospho-alpha-D-ribose 1-diphosphate: step 7/9. The chain is Histidinol-phosphate aminotransferase from Thermoanaerobacter pseudethanolicus (strain ATCC 33223 / 39E) (Clostridium thermohydrosulfuricum).